The sequence spans 716 residues: Eosinophil peroxidase (716 aa).

The first 18 residues, 1 to 18 (MMQQLLALVGALATLILT), serve as a signal peptide directing secretion. Residues 19–140 (QHAEGTAPAS…SGCALQDQAE (122 aa)) constitute a propeptide that is removed on maturation. N-linked (GlcNAc...) asparagine glycosylation is found at Asn53 and Asn114. Cys142 and Cys153 are disulfide-bonded. Asp233 is a binding site for heme b. The Proton acceptor role is filled by His234. Asp235 contacts Ca(2+). Intrachain disulfides connect Cys254–Cys264 and Cys258–Cys282. Residues Thr307, Phe309, Asp311, and Ser313 each contribute to the Ca(2+) site. N-linked (GlcNAc...) asparagine glycosylation is found at Asn328 and Asn364. Cysteines 360 and 371 form a disulfide. Positions 381 and 475 each coordinate heme b. The residue at position 489 (Tyr489) is a 3'-nitrotyrosine. 2 disulfide bridges follow: Cys579–Cys636 and Cys677–Cys702. Asn709 is a glycosylation site (N-linked (GlcNAc...) asparagine).

The protein belongs to the peroxidase family. XPO subfamily. In terms of assembly, tetramer of two light chains and two heavy chains. The cofactor is Ca(2+). Heme b serves as cofactor.

It localises to the cytoplasmic granule. The catalysed reaction is 2 a phenolic donor + H2O2 = 2 a phenolic radical donor + 2 H2O. Its function is as follows. Mediates tyrosine nitration of secondary granule proteins in mature resting eosinophils. The sequence is that of Eosinophil peroxidase (Epx) from Mus musculus (Mouse).